A 325-amino-acid polypeptide reads, in one-letter code: Solute-binding protein Bpro_4736 (325 aa).

Residues 1-27 form the signal peptide; that stretch reads MKTRTLKVLKPTLALLLAASFSAGALA. Residue 168 to 173 coordinates phenylglyoxylate; it reads RISPVY.

Belongs to the bacterial solute-binding protein 7 family. In terms of assembly, the complex is comprised of an extracytoplasmic solute-binding protein and a heteromeric permease formed by two transmembrane proteins.

It is found in the periplasm. Functionally, solute-binding protein that binds phenylglyoxylate (in vitro). Probably part of a tripartite ATP-independent periplasmic (TRAP) transport system that mediates solute transport into the cytoplasm. The polypeptide is Solute-binding protein Bpro_4736 (Polaromonas sp. (strain JS666 / ATCC BAA-500)).